Reading from the N-terminus, the 262-residue chain is Hydroxyethylthiazole kinase (262 aa).

Substrate is bound at residue methionine 50. ATP contacts are provided by arginine 125 and threonine 171. Residue glycine 198 coordinates substrate.

This sequence belongs to the Thz kinase family. The cofactor is Mg(2+).

It carries out the reaction 5-(2-hydroxyethyl)-4-methylthiazole + ATP = 4-methyl-5-(2-phosphooxyethyl)-thiazole + ADP + H(+). It functions in the pathway cofactor biosynthesis; thiamine diphosphate biosynthesis; 4-methyl-5-(2-phosphoethyl)-thiazole from 5-(2-hydroxyethyl)-4-methylthiazole: step 1/1. Catalyzes the phosphorylation of the hydroxyl group of 4-methyl-5-beta-hydroxyethylthiazole (THZ). This Escherichia coli O139:H28 (strain E24377A / ETEC) protein is Hydroxyethylthiazole kinase.